The sequence spans 98 residues: UPF0473 protein GTNG_2486 (98 aa).

Belongs to the UPF0473 family.

The polypeptide is UPF0473 protein GTNG_2486 (Geobacillus thermodenitrificans (strain NG80-2)).